The sequence spans 394 residues: Acid ceramidase (394 aa).

The first 18 residues, 1 to 18 (MRGQSLLTWVLAAAVTCA), serve as a signal peptide directing secretion. C30 and C339 form a disulfide bridge. C142 acts as the Nucleophile in catalysis. N172, N194, N258, N341, and N347 each carry an N-linked (GlcNAc...) asparagine glycan. C387 and C391 are disulfide-bonded.

Belongs to the acid ceramidase family. Heterodimer; disulfide-linked. The heterodimer is composed of the disulfide-linked alpha and beta chains produced by autocatalytic cleavage of the precursor. N-glycosylated. Post-translationally, proteolytically cleaved into two chains alpha and beta that remain associated via a disulfide bond. Cleavage gives rise to a conformation change that activates the enzyme. The same catalytic Cys residue mediates the autoproteolytic cleavage and subsequent hydrolysis of lipid substrates. The beta chain may undergo an additional C-terminal processing. As to expression, widely expressed.

The protein resides in the lysosome. The protein localises to the secreted. It carries out the reaction an N-acylsphing-4-enine + H2O = sphing-4-enine + a fatty acid. The catalysed reaction is N-dodecanoylsphing-4-enine + H2O = dodecanoate + sphing-4-enine. It catalyses the reaction N-(9Z-octadecenoyl)-sphing-4-enine + H2O = sphing-4-enine + (9Z)-octadecenoate. The enzyme catalyses N-tetradecanoylsphing-4-enine + H2O = tetradecanoate + sphing-4-enine. It carries out the reaction N-hexadecanoylsphing-4-enine + H2O = sphing-4-enine + hexadecanoate. The catalysed reaction is N-octadecanoylsphing-4-enine + H2O = sphing-4-enine + octadecanoate. It catalyses the reaction N-dodecanoyl-(4R)-hydroxysphinganine + H2O = (4R)-hydroxysphinganine + dodecanoate. The enzyme catalyses N-(dodecanoyl)-sphinganine + H2O = dodecanoate + sphinganine. It carries out the reaction N-(acetyl)-sphing-4-enine + H2O = sphing-4-enine + acetate. The catalysed reaction is N-(hexanoyl)sphing-4-enine + H2O = hexanoate + sphing-4-enine. It catalyses the reaction N-octanoylsphing-4-enine + H2O = octanoate + sphing-4-enine. The enzyme catalyses N-dodecanoylethanolamine + H2O = dodecanoate + ethanolamine. It functions in the pathway lipid metabolism; sphingolipid metabolism. Lysosomal ceramidase that hydrolyzes sphingolipid ceramides into sphingosine and free fatty acids at acidic pH. Ceramides, sphingosine, and its phosphorylated form sphingosine-1-phosphate are bioactive lipids that mediate cellular signaling pathways regulating several biological processes including cell proliferation, apoptosis and differentiation. Has a higher catalytic efficiency towards C12-ceramides versus other ceramides. Also catalyzes the reverse reaction allowing the synthesis of ceramides from fatty acids and sphingosine. For the reverse synthetic reaction, the natural sphingosine D-erythro isomer is more efficiently utilized as a substrate compared to D-erythro-dihydrosphingosine and D-erythro-phytosphingosine, while the fatty acids with chain lengths of 12 or 14 carbons are the most efficiently used. Also has an N-acylethanolamine hydrolase activity. By regulating the levels of ceramides, sphingosine and sphingosine-1-phosphate in the epidermis, mediates the calcium-induced differentiation of epidermal keratinocytes. Also indirectly regulates tumor necrosis factor/TNF-induced apoptosis. By regulating the intracellular balance between ceramides and sphingosine, in adrenocortical cells, probably also acts as a regulator of steroidogenesis. This chain is Acid ceramidase, found in Mus musculus (Mouse).